We begin with the raw amino-acid sequence, 217 residues long: MKIIMLGAPGAGKGTQAKKIAEKYKIPHISTGDIFRANIKNNTELGAKAKEYMDQGLLVPDEITLDMVMDRFAQDDCKNGYVLDGFPRTIPQAEALNKALVEEGEQIDYAINIEVPDELIVSRMSGRRACVSCGGTYHVVFTPTKKEGICDACGGELTIRDDDKPETVAKRLNVYHNQTQPLINYYHGLGLLEEVDGTKEALEVFEDIIGILGKVAQ.

Residue 10–15 coordinates ATP; it reads GAGKGT. Residues 30 to 59 are NMP; sequence STGDIFRANIKNNTELGAKAKEYMDQGLLV. AMP is bound by residues Thr-31, Arg-36, 57-59, 85-88, and Gln-92; these read LLV and GFPR. The tract at residues 126 to 163 is LID; that stretch reads GRRACVSCGGTYHVVFTPTKKEGICDACGGELTIRDDD. Position 127 (Arg-127) interacts with ATP. Zn(2+) contacts are provided by Cys-130 and Cys-133. ATP is bound at residue 136–137; sequence TY. Zn(2+) contacts are provided by Cys-150 and Cys-153. The AMP site is built by Arg-160 and Arg-171. Lys-199 provides a ligand contact to ATP.

It belongs to the adenylate kinase family. In terms of assembly, monomer.

It localises to the cytoplasm. The enzyme catalyses AMP + ATP = 2 ADP. The protein operates within purine metabolism; AMP biosynthesis via salvage pathway; AMP from ADP: step 1/1. Functionally, catalyzes the reversible transfer of the terminal phosphate group between ATP and AMP. Plays an important role in cellular energy homeostasis and in adenine nucleotide metabolism. The sequence is that of Adenylate kinase from Lachnoclostridium phytofermentans (strain ATCC 700394 / DSM 18823 / ISDg) (Clostridium phytofermentans).